Consider the following 340-residue polypeptide: Heat-inducible transcription repressor HrcA (340 aa).

Belongs to the HrcA family.

Negative regulator of class I heat shock genes (grpE-dnaK-dnaJ and groELS operons). Prevents heat-shock induction of these operons. The sequence is that of Heat-inducible transcription repressor HrcA from Mycoplasma mycoides subsp. mycoides SC (strain CCUG 32753 / NCTC 10114 / PG1).